An 848-amino-acid polypeptide reads, in one-letter code: MNNNDLFQASRRRFLAQLGGLTVAGMLGTSLLTPRRATAAQAATEAVISKEGILTGSHWGAIRATVKDGRFVAAKPFELDKYPSKMIAGLPDHVHNAARIRYPMVRVDWLRKRHLSDTSQRGDNRFVRVSWDEALDMFYEELERVQKTHGPSALLTASGWQSTGMFHNASGMLAKAIALHGNSVGTGGDYSTGAAQVILPRVVGSMEVYEQQTSWPLVLQNSKTIVLWGSDLLKNQQANWWCPDHDVYEYYEQLKAKVAAGEIEVISIDPVVTSTHEYLGREHVKHIAVNPQTDVPLQLALAHTLYSENLYDKNFLANYCVGFEQFLPYLLGEKDGQPKDAAWAEKLTGIDAETIRGLARQMAANRTQIIAGWCVQRMQHGEQWAWMIVVLAAMLGQIGLPGGGFGFGWHYNGAGTPGRKGVILSGFSGSTSIPPVHDNSDYKGYSSTIPIARFIDAILEPGKVINWNGKSVKLPPLKMCIFAGTNPFHRHQQINRIIEGWRKLETVIAIDNQWTSTCRFADIVLPATTQFERNDLDQYGNHSNRGIIAMKQVVPPQFEARNDFDIFRELCRRFNREEAFTEGLDEMGWLKRIWQEGVQQGKGRGVHLPAFNDFWNNKEYVEFDHPQMFVRHQAFREDPDLEPLGTPSGLIEIYSKTIADMNYDDCQGHPMWFEKIERSHGGPGSQKYPLHLQSVHPDFRLHSQLCESETLRQQYTVAGKEPVFISPKDASARGIRHGDVVRVFNVRGQVLAGAVVSDRYAPGVARIHEGAWYDPDKGGEPGALCKYGNPNVLTIDIGTSQLAQATSAHTTLVEIEKYNGTVEQVTAFNGPVEMVAQCEYVPASQVKS.

Residues 1–39 (MNNNDLFQASRRRFLAQLGGLTVAGMLGTSLLTPRRATA) constitute a signal peptide (tat-type signal). Residue Ser191 participates in Mo-bis(molybdopterin guanine dinucleotide) binding.

The protein belongs to the prokaryotic molybdopterin-containing oxidoreductase family. Requires Mo-bis(molybdopterin guanine dinucleotide) as cofactor. Post-translationally, predicted to be exported by the Tat system. The position of the signal peptide cleavage has not been experimentally proven.

It is found in the periplasm. It carries out the reaction trimethylamine + 2 Fe(III)-[cytochrome c] + H2O = trimethylamine N-oxide + 2 Fe(II)-[cytochrome c] + 3 H(+). Its function is as follows. Reduces trimethylamine-N-oxide (TMAO) into trimethylamine; an anaerobic reaction coupled to energy-yielding reactions. This Escherichia coli O6:H1 (strain CFT073 / ATCC 700928 / UPEC) protein is Trimethylamine-N-oxide reductase 1 (torA).